The chain runs to 871 residues: DNA mismatch repair protein MutS (871 aa).

617–624 (GPNMGGKS) contacts ATP.

Belongs to the DNA mismatch repair MutS family.

In terms of biological role, this protein is involved in the repair of mismatches in DNA. It is possible that it carries out the mismatch recognition step. This protein has a weak ATPase activity. This Hydrogenovibrio crunogenus (strain DSM 25203 / XCL-2) (Thiomicrospira crunogena) protein is DNA mismatch repair protein MutS.